A 646-amino-acid chain; its full sequence is MAKIIGIDLGTTNSCVAVLEGDKVKVIENAEGARTTPSIIAYKDGEILVGQSAKRQAVTNPKNTLFAIKRLIGRRYEDQAVQKDIGLVPYKIIKADNGDAWVEVNDKKLAPQQISAEILKKMKKTAEDYLGETVTEAVITVPAYFNDAQRQATKDAGKIAGLDVKRIINEPTAAALAFGMDKKEGDRKVAVYDLGGGTFDVSIIEIADLDGDQQIEVLSTNGDTFLGGEDFDNALIEYLVEEFKKEQNVNLKNDPLALQRLKEAAEKAKIELSSSNATEINLPYITADATGPKHLVINVTRAKLEGLVADLVARTIEPCKIALKDAGLSTSDISDVILVGGQSRMPLVQQKVQEFFGREPRKDVNPDEAVAIGAAIQGAVLSGDKNDVLLLDVTPLTLGIETMGGVLTPIIEKNTTIPAKKSQVFSTAADNQPAVDISVYQGERKMAQQNKLLGNFQLGDIPPAPRGVPQIEVSFDINADGILKVSAKDKSTGKEQSIQIKANSGLSDAEIEAMIKDAEANAEEDRKFEELAKARNEADALISSSNKAVKDLGDKVTEDEKTAVNTAVSELEAATKENDVEAIKAKTEALQNILMPITQRAYEQAQQAGGAEGFDPNAFQGGDAGQQKADDGVVDAEFTEVKDDKK.

Position 198 is a phosphothreonine; by autocatalysis (threonine 198). The tract at residues glutamate 603–lysine 646 is disordered. Residues alanine 618 to glutamine 627 show a composition bias toward low complexity.

The protein belongs to the heat shock protein 70 family.

Its function is as follows. Acts as a chaperone. This Acinetobacter baumannii (strain ACICU) protein is Chaperone protein DnaK.